We begin with the raw amino-acid sequence, 81 residues long: Putative chemokine-related protein B42 (81 aa).

3 cysteine pairs are disulfide-bonded: C7/C73, C8/C29, and C11/C45.

Expressed in placenta, heart, lung, liver, pancreas, skeletal muscle and brain.

The protein localises to the cytoplasm. In Homo sapiens (Human), this protein is Putative chemokine-related protein B42.